The sequence spans 173 residues: Large ribosomal subunit protein uL5 (173 aa).

It belongs to the universal ribosomal protein uL5 family. In terms of assembly, part of the 50S ribosomal subunit; contacts the 5S rRNA and probably tRNA. Forms a bridge to the 30S subunit in the 70S ribosome.

This is one of the proteins that bind and probably mediate the attachment of the 5S RNA into the large ribosomal subunit, where it forms part of the central protuberance. In the 70S ribosome it contacts protein S13 of the 30S subunit (bridge B1b), connecting the 2 subunits; this bridge is implicated in subunit movement. May contact the P site tRNA; the 5S rRNA and some of its associated proteins might help stabilize positioning of ribosome-bound tRNAs. The protein is Large ribosomal subunit protein uL5 of Nitrosopumilus maritimus (strain SCM1).